We begin with the raw amino-acid sequence, 59 residues long: Photosystem II reaction center protein K (59 aa).

A propeptide spanning residues 1 to 22 (MLNIFSLICLNSALHSSSFFFA) is cleaved from the precursor. Residues 38–58 (MPVIPVLFFLLALVWQAAVSF) form a helical membrane-spanning segment.

It belongs to the PsbK family. In terms of assembly, PSII is composed of 1 copy each of membrane proteins PsbA, PsbB, PsbC, PsbD, PsbE, PsbF, PsbH, PsbI, PsbJ, PsbK, PsbL, PsbM, PsbT, PsbX, PsbY, PsbZ, Psb30/Ycf12, at least 3 peripheral proteins of the oxygen-evolving complex and a large number of cofactors. It forms dimeric complexes.

The protein localises to the plastid. It localises to the chloroplast thylakoid membrane. Functionally, one of the components of the core complex of photosystem II (PSII). PSII is a light-driven water:plastoquinone oxidoreductase that uses light energy to abstract electrons from H(2)O, generating O(2) and a proton gradient subsequently used for ATP formation. It consists of a core antenna complex that captures photons, and an electron transfer chain that converts photonic excitation into a charge separation. This is Photosystem II reaction center protein K from Calycanthus floridus var. glaucus (Eastern sweetshrub).